We begin with the raw amino-acid sequence, 491 residues long: Lysosomal Pro-X carboxypeptidase (491 aa).

The N-terminal stretch at 1–17 (MGCRALLLLSFLLLGAA) is a signal peptide. Residues 18–43 (TTIPPRLKTLGSPHLSASPTPDPAVA) constitute a propeptide that is removed on maturation. Asn-99 is a glycosylation site (N-linked (GlcNAc...) asparagine). The Charge relay system role is filled by Ser-177. The tract at residues 192 to 332 (HIVVGALAAS…QNIFQALSVY (141 aa)) is SKS domain. Intrachain disulfides connect Cys-213–Cys-370, Cys-231–Cys-308, Cys-262–Cys-341, and Cys-362–Cys-392. N-linked (GlcNAc...) asparagine glycans are attached at residues Asn-315, Asn-334, and Asn-343. Asn-413 carries an N-linked (GlcNAc...) asparagine glycan. Residues Asp-428 and His-453 each act as charge relay system in the active site.

The protein belongs to the peptidase S28 family. In terms of assembly, homodimer.

The protein resides in the lysosome. It carries out the reaction Cleavage of a -Pro-|-Xaa bond to release a C-terminal amino acid.. Functionally, cleaves C-terminal amino acids linked to proline in peptides such as angiotensin II, III and des-Arg9-bradykinin. This cleavage occurs at acidic pH, but enzymatic activity is retained with some substrates at neutral pH. This Mus musculus (Mouse) protein is Lysosomal Pro-X carboxypeptidase (Prcp).